Reading from the N-terminus, the 1860-residue chain is Collagen alpha-1(XXVII) chain (1860 aa).

The N-terminal stretch at 1-41 (MGAGSARGARGTAAAAAARGGGFLFSWILVSFACHLASTQG) is a signal peptide. The propeptide at 42 to 624 (APEDVDILQR…AGSTPFPLLM (583 aa)) is N-terminal propeptide. A Laminin G-like domain is found at 71-236 (QSGFIFTQRA…NYCTHLRKQC (166 aa)). N271 carries N-linked (GlcNAc...) asparagine glycosylation. Disordered regions lie at residues 278–608 (ALGS…TSSG), 625–772 (GPPG…GSDG), and 851–1625 (LKGD…IQLQ). 2 stretches are compositionally biased toward polar residues: residues 298–309 (TKPQRTSPTNPH) and 386–409 (HPTQ…QVPP). The span at 432-445 (MPRPPPPSTRPLPP) shows a compositional bias: pro residues. 2 stretches are compositionally biased toward low complexity: residues 446-457 (TTSSSKKPIPTL) and 485-505 (TALS…RPPA). Positions 509–518 (PPTSGTSTPR) are enriched in polar residues. 2 stretches are compositionally biased toward low complexity: residues 572-588 (TTRP…QTTP) and 599-608 (SSSPRPTSSG). 16 Collagen-like domains span residues 625 to 679 (GPPG…GDPG), 688 to 747 (GAKG…PGPV), 748 to 807 (GDPG…DGNP), 808 to 867 (GELG…SGDP), 871 to 930 (GDKG…KGKP), 931 to 990 (GARG…PGPV), 1003 to 1062 (GEPG…RGAK), 1066 to 1125 (GPRG…PGTK), 1126 to 1185 (GLPG…IGQR), 1192 to 1251 (GDSG…QGEK), 1258 to 1317 (GAKG…KGIV), 1318 to 1378 (GPLG…RGKP), 1382 to 1441 (GQPG…EGIA), 1442 to 1501 (GPDG…PGQL), 1502 to 1561 (GPPG…QGPR), and 1562 to 1621 (GPPG…PGGP). Residues 625-1618 (GPPGPKGDCG…RGRPGPPGPP (994 aa)) are triple-helical region. Over residues 654-669 (RGPPGPYGNPGLPGPP) the composition is skewed to pro residues. The segment covering 714–734 (PGPAGHPGEQGQPGPEGSPGA) has biased composition (low complexity). Low complexity-rich tracts occupy residues 911–924 (FPGD…NGPE) and 932–944 (ARGL…QLGP). Positions 1033–1042 (GMPGGMGTPG) are enriched in gly residues. Positions 1043 to 1053 (EPGPQGPPGSR) are enriched in pro residues. The segment covering 1130–1142 (EPGPQGPQGPIGP) has biased composition (pro residues). Composition is skewed to basic and acidic residues over residues 1202–1220 (LKGD…EKGQ) and 1241–1253 (PEGK…EKGR). 2 stretches are compositionally biased toward basic and acidic residues: residues 1326-1338 (KGEK…DGKA) and 1350-1360 (PVGDRGDRGEP). Positions 1449–1458 (RDGQAGQQGE) are enriched in low complexity. A compositionally biased stretch (low complexity) spans 1572 to 1587 (IVGPLGILGPSGLPGP). Over residues 1603–1620 (RGPPGPRGRPGPPGPPGG) the composition is skewed to pro residues. The propeptide at 1622–1860 (IQLQQDDLGA…RLEVGPACFL (239 aa)) is C-terminal propeptide. In terms of domain architecture, Fibrillar collagen NC1 spans 1660–1860 (GEIFKTLHYL…RLEVGPACFL (201 aa)). 3 cysteine pairs are disulfide-bonded: C1690-C1722, C1731-C1858, and C1767-C1811. Positions 1708, 1710, 1713, and 1716 each coordinate Ca(2+). N1769 is a glycosylation site (N-linked (GlcNAc...) asparagine).

Belongs to the fibrillar collagen family.

The protein resides in the secreted. It is found in the extracellular space. The protein localises to the extracellular matrix. Its function is as follows. Plays a role during the calcification of cartilage and the transition of cartilage to bone. In Homo sapiens (Human), this protein is Collagen alpha-1(XXVII) chain (COL27A1).